We begin with the raw amino-acid sequence, 429 residues long: Ribosomal RNA small subunit methyltransferase B (429 aa).

S-adenosyl-L-methionine-binding positions include 254-260 (CAAPGGK), Asp277, Asp303, and Asp322. The active-site Nucleophile is Cys375.

It belongs to the class I-like SAM-binding methyltransferase superfamily. RsmB/NOP family.

It is found in the cytoplasm. It catalyses the reaction cytidine(967) in 16S rRNA + S-adenosyl-L-methionine = 5-methylcytidine(967) in 16S rRNA + S-adenosyl-L-homocysteine + H(+). Functionally, specifically methylates the cytosine at position 967 (m5C967) of 16S rRNA. In Yersinia pseudotuberculosis serotype O:1b (strain IP 31758), this protein is Ribosomal RNA small subunit methyltransferase B.